We begin with the raw amino-acid sequence, 391 residues long: Cytochrome P450 165A3 (391 aa).

The tract at residues 1-22 (MFEEKNALRGTEIHRRERFDPG) is disordered. Residue C342 participates in heme binding.

It belongs to the cytochrome P450 family. It depends on heme as a cofactor.

The protein operates within antibiotic biosynthesis; vancomycin biosynthesis. In terms of biological role, involved in the coupling of aromatic side chains of the heptapeptide of vancomycin. In Amycolatopsis orientalis (Nocardia orientalis), this protein is Cytochrome P450 165A3 (cyp165A3).